The sequence spans 236 residues: Small ribosomal subunit protein uS2c (236 aa).

This sequence belongs to the universal ribosomal protein uS2 family.

It is found in the plastid. It localises to the chloroplast. This chain is Small ribosomal subunit protein uS2c (rps2), found in Olimarabidopsis pumila (Dwarf rocket).